The sequence spans 166 residues: Lipoprotein signal peptidase (166 aa).

3 consecutive transmembrane segments (helical) span residues 12-32 (WLWLVVVVLIIDLGSKYLILQ), 70-90 (WFFAGIAIGICVILLVMMYRS), and 102-122 (ALIIGGALGNLFDRLWHGFVV). Active-site residues include Asp-123 and Asp-141. The chain crosses the membrane as a helical span at residues 137–157 (FNLADTAICIGAALIVLEGFL).

The protein belongs to the peptidase A8 family.

It is found in the cell inner membrane. It catalyses the reaction Release of signal peptides from bacterial membrane prolipoproteins. Hydrolyzes -Xaa-Yaa-Zaa-|-(S,diacylglyceryl)Cys-, in which Xaa is hydrophobic (preferably Leu), and Yaa (Ala or Ser) and Zaa (Gly or Ala) have small, neutral side chains.. It participates in protein modification; lipoprotein biosynthesis (signal peptide cleavage). This protein specifically catalyzes the removal of signal peptides from prolipoproteins. This Salmonella paratyphi A (strain ATCC 9150 / SARB42) protein is Lipoprotein signal peptidase.